A 665-amino-acid chain; its full sequence is Succinate dehydrogenase [ubiquinone] flavoprotein subunit B, mitochondrial (665 aa).

A mitochondrion-targeting transit peptide spans 1–45; it reads MALLKVAPSRLLSRALQLTSTLQNCTATSIAARRNFHFTVYGRKD. Ala72, Ala75, Thr94, Lys95, and Ser101 together coordinate FAD. His102 carries the post-translational modification Tele-8alpha-FAD histidine. Thr103, Gly108, Ala224, and Asp278 together coordinate FAD. The oxaloacetate site is built by His299, Arg343, and His410. Arg343 (proton acceptor) is an active-site residue. Glu443 contributes to the FAD binding site. Oxaloacetate-binding residues include Arg454 and Ala457. Residues Ser459 and Leu460 each coordinate FAD.

The protein belongs to the FAD-dependent oxidoreductase 2 family. FRD/SDH subfamily. As to quaternary structure, component of complex II composed of four subunits: a flavoprotein (FP), an iron-sulfur protein (IP), and a cytochrome b composed of a large and a small subunit. The cofactor is FAD.

It localises to the mitochondrion inner membrane. It catalyses the reaction a ubiquinone + succinate = a ubiquinol + fumarate. The enzyme catalyses (R)-malate + a quinone = enol-oxaloacetate + a quinol. It carries out the reaction (S)-malate + a quinone = enol-oxaloacetate + a quinol. Its pathway is carbohydrate metabolism; tricarboxylic acid cycle; fumarate from succinate (eukaryal route): step 1/1. Its activity is regulated as follows. Enol-oxaloacetate inhibits the succinate dehydrogenase activity. In terms of biological role, flavoprotein (FP) subunit of succinate dehydrogenase (SDH) that is involved in complex II of the mitochondrial electron transport chain and is responsible for transferring electrons from succinate to ubiquinone (coenzyme Q). SDH also oxidizes malate to the non-canonical enol form of oxaloacetate, enol-oxaloacetate. Enol-oxaloacetate, which is a potent inhibitor of the succinate dehydrogenase activity, is further isomerized into keto-oxaloacetate. The protein is Succinate dehydrogenase [ubiquinone] flavoprotein subunit B, mitochondrial (sdha-b) of Xenopus laevis (African clawed frog).